Consider the following 170-residue polypeptide: Crossover junction endodeoxyribonuclease RuvC (170 aa).

Catalysis depends on residues Asp11, Glu71, and Asp143. Mg(2+) is bound by residues Asp11, Glu71, and Asp143.

Belongs to the RuvC family. Homodimer which binds Holliday junction (HJ) DNA. The HJ becomes 2-fold symmetrical on binding to RuvC with unstacked arms; it has a different conformation from HJ DNA in complex with RuvA. In the full resolvosome a probable DNA-RuvA(4)-RuvB(12)-RuvC(2) complex forms which resolves the HJ. The cofactor is Mg(2+).

Its subcellular location is the cytoplasm. The enzyme catalyses Endonucleolytic cleavage at a junction such as a reciprocal single-stranded crossover between two homologous DNA duplexes (Holliday junction).. The RuvA-RuvB-RuvC complex processes Holliday junction (HJ) DNA during genetic recombination and DNA repair. Endonuclease that resolves HJ intermediates. Cleaves cruciform DNA by making single-stranded nicks across the HJ at symmetrical positions within the homologous arms, yielding a 5'-phosphate and a 3'-hydroxyl group; requires a central core of homology in the junction. The consensus cleavage sequence is 5'-(A/T)TT(C/G)-3'. Cleavage occurs on the 3'-side of the TT dinucleotide at the point of strand exchange. HJ branch migration catalyzed by RuvA-RuvB allows RuvC to scan DNA until it finds its consensus sequence, where it cleaves and resolves the cruciform DNA. This is Crossover junction endodeoxyribonuclease RuvC from Agrobacterium fabrum (strain C58 / ATCC 33970) (Agrobacterium tumefaciens (strain C58)).